A 111-amino-acid polypeptide reads, in one-letter code: UPF0122 protein CKR_1296 (111 aa).

The protein belongs to the UPF0122 family.

Might take part in the signal recognition particle (SRP) pathway. This is inferred from the conservation of its genetic proximity to ftsY/ffh. May be a regulatory protein. The polypeptide is UPF0122 protein CKR_1296 (Clostridium kluyveri (strain NBRC 12016)).